We begin with the raw amino-acid sequence, 193 residues long: FMN-dependent NADH:quinone oxidoreductase 1 (193 aa).

Residues Ser9, 15–17 (SIS), and 85–88 (MYNF) contribute to the FMN site.

The protein belongs to the azoreductase type 1 family. In terms of assembly, homodimer. The cofactor is FMN.

It catalyses the reaction 2 a quinone + NADH + H(+) = 2 a 1,4-benzosemiquinone + NAD(+). The enzyme catalyses N,N-dimethyl-1,4-phenylenediamine + anthranilate + 2 NAD(+) = 2-(4-dimethylaminophenyl)diazenylbenzoate + 2 NADH + 2 H(+). Quinone reductase that provides resistance to thiol-specific stress caused by electrophilic quinones. Functionally, also exhibits azoreductase activity. Catalyzes the reductive cleavage of the azo bond in aromatic azo compounds to the corresponding amines. The sequence is that of FMN-dependent NADH:quinone oxidoreductase 1 from Xanthomonas axonopodis pv. citri (strain 306).